A 187-amino-acid chain; its full sequence is ATP synthase subunit b (187 aa).

Residues 32–52 (NILDTNLINLAIIITVLFVFG) traverse the membrane as a helical segment.

Belongs to the ATPase B chain family. As to quaternary structure, F-type ATPases have 2 components, F(1) - the catalytic core - and F(0) - the membrane proton channel. F(1) has five subunits: alpha(3), beta(3), gamma(1), delta(1), epsilon(1). F(0) has four main subunits: a(1), b(1), b'(1) and c(10-14). The alpha and beta chains form an alternating ring which encloses part of the gamma chain. F(1) is attached to F(0) by a central stalk formed by the gamma and epsilon chains, while a peripheral stalk is formed by the delta, b and b' chains.

It localises to the cellular thylakoid membrane. F(1)F(0) ATP synthase produces ATP from ADP in the presence of a proton or sodium gradient. F-type ATPases consist of two structural domains, F(1) containing the extramembraneous catalytic core and F(0) containing the membrane proton channel, linked together by a central stalk and a peripheral stalk. During catalysis, ATP synthesis in the catalytic domain of F(1) is coupled via a rotary mechanism of the central stalk subunits to proton translocation. Its function is as follows. Component of the F(0) channel, it forms part of the peripheral stalk, linking F(1) to F(0). The protein is ATP synthase subunit b of Trichormus variabilis (strain ATCC 29413 / PCC 7937) (Anabaena variabilis).